We begin with the raw amino-acid sequence, 150 residues long: Nucleoside diphosphate kinase (150 aa).

ATP contacts are provided by Lys-9, Phe-57, Arg-85, Thr-91, Arg-102, and Asn-112. The active-site Pros-phosphohistidine intermediate is the His-115.

It belongs to the NDK family. In terms of assembly, homotetramer. Mg(2+) is required as a cofactor.

The protein localises to the cytoplasm. The catalysed reaction is a 2'-deoxyribonucleoside 5'-diphosphate + ATP = a 2'-deoxyribonucleoside 5'-triphosphate + ADP. It catalyses the reaction a ribonucleoside 5'-diphosphate + ATP = a ribonucleoside 5'-triphosphate + ADP. Functionally, major role in the synthesis of nucleoside triphosphates other than ATP. The ATP gamma phosphate is transferred to the NDP beta phosphate via a ping-pong mechanism, using a phosphorylated active-site intermediate. The sequence is that of Nucleoside diphosphate kinase from Thermosynechococcus vestitus (strain NIES-2133 / IAM M-273 / BP-1).